Here is a 151-residue protein sequence, read N- to C-terminus: Transcriptional repressor NrdR (151 aa).

The tract at residues 1 to 21 (MRCPFCGEADTQVKDSRPTED) is disordered. The segment at 3–34 (CPFCGEADTQVKDSRPTEDGAAIRRRRFCPQC) is a zinc-finger region. A compositionally biased stretch (basic and acidic residues) spans 11–21 (TQVKDSRPTED). Positions 49–139 (LVVVKADQRR…VYRDFREAKD (91 aa)) constitute an ATP-cone domain.

Belongs to the NrdR family. The cofactor is Zn(2+).

Negatively regulates transcription of bacterial ribonucleotide reductase nrd genes and operons by binding to NrdR-boxes. The polypeptide is Transcriptional repressor NrdR (Acidiphilium cryptum (strain JF-5)).